Reading from the N-terminus, the 366-residue chain is Ferredoxin--NADP reductase (366 aa).

FAD is bound by residues Asp-51, Gln-59, Tyr-64, Val-104, Phe-139, Asp-308, and Thr-349.

This sequence belongs to the ferredoxin--NADP reductase type 2 family. As to quaternary structure, homodimer. The cofactor is FAD.

The catalysed reaction is 2 reduced [2Fe-2S]-[ferredoxin] + NADP(+) + H(+) = 2 oxidized [2Fe-2S]-[ferredoxin] + NADPH. The polypeptide is Ferredoxin--NADP reductase (Polaromonas naphthalenivorans (strain CJ2)).